The sequence spans 345 residues: Ubiquitin-associated domain-containing protein 2 (345 aa).

Positions 1–35 (MFTSTGSSGLYKAPLSKSLLLVPSALSLLLALLLP) are cleaved as a signal peptide. Over 36–91 (HCQKLFVYDLHAVKNDFQIWRLICGRIICLDLKDTFCSSLLIYNFRIFERRYGSRK) the chain is Extracellular. Residues 92–112 (FASFLLGSWVLSALFDFLLVE) traverse the membrane as a helical segment. The Cytoplasmic segment spans residues 113 to 125 (AMQYFFGITAASN). Residues 126-146 (LPSGFLAPVFALFVPFYCSIP) form a helical membrane-spanning segment. The Extracellular segment spans residues 147–163 (RVQVAQILGPLSITNKT). N-linked (GlcNAc...) asparagine glycosylation occurs at Asn161. The chain crosses the membrane as a helical span at residues 164–184 (LIYILGLQLFTSGSYIWIVAI). Residues 185 to 345 (SGLMSGLCYN…NVATNFLLQH (161 aa)) are Cytoplasmic-facing. The region spanning 305-345 (EVSEEQVARLMEMGFSRGDALEALRASNNDLNVATNFLLQH) is the UBA domain.

In terms of assembly, interacts with LMBR1L, FAF2, AMFR and VCP.

It localises to the endoplasmic reticulum membrane. Restricts trafficking of FAF2 from the endoplasmic reticulum to lipid droplets. In association with LMBR1L and E3 ubiquitin-protein ligase AMFR, negatively regulates the canonical Wnt signaling pathway in the lymphocytes by promoting the ubiquitin-mediated degradation of CTNNB1 and Wnt receptors FZD6 and LRP6. The protein is Ubiquitin-associated domain-containing protein 2 (UBAC2) of Macaca fascicularis (Crab-eating macaque).